The following is a 141-amino-acid chain: HTH-type transcriptional repressor NsrR (141 aa).

Residues Gln-2–Glu-129 form the HTH rrf2-type domain. The segment at residues Ile-28 to Arg-51 is a DNA-binding region (H-T-H motif). 3 residues coordinate [2Fe-2S] cluster: Cys-91, Cys-96, and Cys-102.

Requires [2Fe-2S] cluster as cofactor.

Nitric oxide-sensitive repressor of genes involved in protecting the cell against nitrosative stress. May require iron for activity. The chain is HTH-type transcriptional repressor NsrR from Salmonella choleraesuis (strain SC-B67).